A 465-amino-acid chain; its full sequence is GTPase Der (465 aa).

EngA-type G domains lie at 27–190 and 202–375; these read PVLA…PEAP and RRIA…AGWE. GTP contacts are provided by residues 33–40, 80–84, 142–145, 208–215, 255–259, and 320–323; these read GRPNVGKS, DTGGW, NKVD, DTAGI, and NKWD. A KH-like domain is found at 376–458; the sequence is TRVPTGRLNA…PIHISVRVRE (83 aa).

The protein belongs to the TRAFAC class TrmE-Era-EngA-EngB-Septin-like GTPase superfamily. EngA (Der) GTPase family. In terms of assembly, associates with the 50S ribosomal subunit.

Its function is as follows. GTPase that plays an essential role in the late steps of ribosome biogenesis. The chain is GTPase Der from Streptomyces coelicolor (strain ATCC BAA-471 / A3(2) / M145).